The chain runs to 1413 residues: DNA-directed RNA polymerase subunit beta' (1413 aa).

Zn(2+)-binding residues include Cys-70, Cys-72, Cys-85, and Cys-88. Residues Asp-460, Asp-462, and Asp-464 each contribute to the Mg(2+) site. Positions 814, 888, 895, and 898 each coordinate Zn(2+).

Belongs to the RNA polymerase beta' chain family. The RNAP catalytic core consists of 2 alpha, 1 beta, 1 beta' and 1 omega subunit. When a sigma factor is associated with the core the holoenzyme is formed, which can initiate transcription. The cofactor is Mg(2+). Zn(2+) serves as cofactor.

The catalysed reaction is RNA(n) + a ribonucleoside 5'-triphosphate = RNA(n+1) + diphosphate. Functionally, DNA-dependent RNA polymerase catalyzes the transcription of DNA into RNA using the four ribonucleoside triphosphates as substrates. This Bordetella avium (strain 197N) protein is DNA-directed RNA polymerase subunit beta'.